Reading from the N-terminus, the 845-residue chain is ABC transporter A family member 9 (845 aa).

7 helical membrane passes run 33-53, 192-212, 235-255, 292-312, 318-338, 347-367, and 417-437; these read CVQI…NFWV, AFVA…FLGG, IASL…MPLF, IYFI…FAVF, FAMF…SFFL, AASI…SILS, and SKII…ALYL. Residues 531–762 enclose the ABC transporter domain; that stretch reads VIIEGLTKHY…FGDGYSVRIN (232 aa). 565–572 is an ATP binding site; that stretch reads GANGAGKT.

This sequence belongs to the ABC transporter superfamily. ABCA family.

It localises to the membrane. The chain is ABC transporter A family member 9 (abcA9) from Dictyostelium discoideum (Social amoeba).